Here is a 181-residue protein sequence, read N- to C-terminus: Large ribosomal subunit protein uL6 (181 aa).

It belongs to the universal ribosomal protein uL6 family. In terms of assembly, part of the 50S ribosomal subunit.

Its function is as follows. This protein binds to the 23S rRNA, and is important in its secondary structure. It is located near the subunit interface in the base of the L7/L12 stalk, and near the tRNA binding site of the peptidyltransferase center. The chain is Large ribosomal subunit protein uL6 from Ruthia magnifica subsp. Calyptogena magnifica.